We begin with the raw amino-acid sequence, 657 residues long: Heat shock protein hsp-6 (657 aa).

The N-terminal 27 residues, 1-27, are a transit peptide targeting the mitochondrion; that stretch reads MLSARSFLSSARTIARSSLMSARSLSD. Residues 637-657 are disordered; it reads KNSGGDAQEAKTAEEPKKEQN. The segment covering 644-657 has biased composition (basic and acidic residues); the sequence is QEAKTAEEPKKEQN.

This sequence belongs to the heat shock protein 70 family.

The protein resides in the mitochondrion. This is Heat shock protein hsp-6 from Caenorhabditis elegans.